Here is a 96-residue protein sequence, read N- to C-terminus: Aspartyl/glutamyl-tRNA(Asn/Gln) amidotransferase subunit C (96 aa).

This sequence belongs to the GatC family. In terms of assembly, heterotrimer of A, B and C subunits.

It catalyses the reaction L-glutamyl-tRNA(Gln) + L-glutamine + ATP + H2O = L-glutaminyl-tRNA(Gln) + L-glutamate + ADP + phosphate + H(+). The enzyme catalyses L-aspartyl-tRNA(Asn) + L-glutamine + ATP + H2O = L-asparaginyl-tRNA(Asn) + L-glutamate + ADP + phosphate + 2 H(+). Allows the formation of correctly charged Asn-tRNA(Asn) or Gln-tRNA(Gln) through the transamidation of misacylated Asp-tRNA(Asn) or Glu-tRNA(Gln) in organisms which lack either or both of asparaginyl-tRNA or glutaminyl-tRNA synthetases. The reaction takes place in the presence of glutamine and ATP through an activated phospho-Asp-tRNA(Asn) or phospho-Glu-tRNA(Gln). This is Aspartyl/glutamyl-tRNA(Asn/Gln) amidotransferase subunit C from Acaryochloris marina (strain MBIC 11017).